Consider the following 271-residue polypeptide: Hydroxyethylthiazole kinase (271 aa).

Met-50 contacts substrate. Positions 126 and 172 each coordinate ATP. Gly-199 lines the substrate pocket.

It belongs to the Thz kinase family. Mg(2+) is required as a cofactor.

The enzyme catalyses 5-(2-hydroxyethyl)-4-methylthiazole + ATP = 4-methyl-5-(2-phosphooxyethyl)-thiazole + ADP + H(+). Its pathway is cofactor biosynthesis; thiamine diphosphate biosynthesis; 4-methyl-5-(2-phosphoethyl)-thiazole from 5-(2-hydroxyethyl)-4-methylthiazole: step 1/1. In terms of biological role, catalyzes the phosphorylation of the hydroxyl group of 4-methyl-5-beta-hydroxyethylthiazole (THZ). This Akkermansia muciniphila (strain ATCC BAA-835 / DSM 22959 / JCM 33894 / BCRC 81048 / CCUG 64013 / CIP 107961 / Muc) protein is Hydroxyethylthiazole kinase.